Reading from the N-terminus, the 29-residue chain is Cytochrome b6-f complex subunit 8 (29 aa).

The chain crosses the membrane as a helical span at residues 3–23 (IISLAWAALMVVFTFSLSLVV).

Belongs to the PetN family. As to quaternary structure, the 4 large subunits of the cytochrome b6-f complex are cytochrome b6, subunit IV (17 kDa polypeptide, PetD), cytochrome f and the Rieske protein, while the 4 small subunits are PetG, PetL, PetM and PetN. The complex functions as a dimer.

The protein resides in the plastid. The protein localises to the chloroplast thylakoid membrane. Its function is as follows. Component of the cytochrome b6-f complex, which mediates electron transfer between photosystem II (PSII) and photosystem I (PSI), cyclic electron flow around PSI, and state transitions. The chain is Cytochrome b6-f complex subunit 8 from Nicotiana tomentosiformis (Tobacco).